Here is a 211-residue protein sequence, read N- to C-terminus: dITP/XTP pyrophosphatase (211 aa).

Threonine 13 to lysine 18 lines the substrate pocket. Positions 45 and 74 each coordinate Mg(2+). The active-site Proton acceptor is the aspartate 74. Substrate-binding positions include serine 75, phenylalanine 160 to aspartate 163, lysine 183, and histidine 195 to arginine 196.

This sequence belongs to the HAM1 NTPase family. Homodimer. Mg(2+) serves as cofactor.

It catalyses the reaction XTP + H2O = XMP + diphosphate + H(+). The enzyme catalyses dITP + H2O = dIMP + diphosphate + H(+). It carries out the reaction ITP + H2O = IMP + diphosphate + H(+). Its function is as follows. Pyrophosphatase that catalyzes the hydrolysis of nucleoside triphosphates to their monophosphate derivatives, with a high preference for the non-canonical purine nucleotides XTP (xanthosine triphosphate), dITP (deoxyinosine triphosphate) and ITP. Seems to function as a house-cleaning enzyme that removes non-canonical purine nucleotides from the nucleotide pool, thus preventing their incorporation into DNA/RNA and avoiding chromosomal lesions. This Bradyrhizobium diazoefficiens (strain JCM 10833 / BCRC 13528 / IAM 13628 / NBRC 14792 / USDA 110) protein is dITP/XTP pyrophosphatase.